Reading from the N-terminus, the 459-residue chain is Glycerol-3-phosphate acyltransferase, chloroplastic (459 aa).

Residues 1–90 constitute a chloroplast transit peptide; sequence MTLTFSSSAA…FNEAAGETPS (90 aa). The short motif at 229 to 234 is the HXXXXD motif element; the sequence is HQSEAD.

The protein belongs to the GPAT/DAPAT family.

The protein localises to the plastid. Its subcellular location is the chloroplast stroma. The enzyme catalyses sn-glycerol 3-phosphate + an acyl-CoA = a 1-acyl-sn-glycero-3-phosphate + CoA. The protein operates within phospholipid metabolism; CDP-diacylglycerol biosynthesis; CDP-diacylglycerol from sn-glycerol 3-phosphate: step 1/3. Its function is as follows. Esterifies acyl-group from acyl-ACP to the sn-1 position of glycerol-3-phosphate. The enzyme from chilling-resistant plants discriminates against non-fluid palmitic acid and selects oleic acid whereas the enzyme from sensitive plants accepts both fatty acids. This is an oleate-selective acyltransferase. This chain is Glycerol-3-phosphate acyltransferase, chloroplastic (ATS1), found in Arabidopsis thaliana (Mouse-ear cress).